Consider the following 54-residue polypeptide: UPF0391 membrane protein BMEI0373 (54 aa).

The next 2 helical transmembrane spans lie at 5-25 and 29-48; these read VLVF…GIAG and GIAQ…SLIA.

Belongs to the UPF0391 family.

Its subcellular location is the cell membrane. This is UPF0391 membrane protein BMEI0373 from Brucella melitensis biotype 1 (strain ATCC 23456 / CCUG 17765 / NCTC 10094 / 16M).